A 36-amino-acid chain; its full sequence is Glycine-rich protein GWK (36 aa).

A disordered region spans residues 1–36 (YKRGGGGWGGGGGWKGGGGGGGGWKGGGGGGKGGGG).

Possesses antifungal activity against a number of phytopathogenic fungi, including H.sativum and F.culmorum. In Cucumis melo (Muskmelon), this protein is Glycine-rich protein GWK.